The chain runs to 82 residues: U-scoloptoxin(21)-Sm3a (82 aa).

The first 21 residues, 1–21, serve as a signal peptide directing secretion; the sequence is MKIIALLLMVFLDFIIVNXAE.

The protein belongs to the scoloptoxin-21 family. In terms of tissue distribution, expressed by the venom gland.

The protein localises to the secreted. This is U-scoloptoxin(21)-Sm3a from Scolopendra morsitans (Tanzanian blue ringleg centipede).